A 397-amino-acid chain; its full sequence is 1-deoxy-D-xylulose 5-phosphate reductoisomerase (397 aa).

Positions 10, 11, 12, 13, 36, 38, and 124 each coordinate NADPH. A 1-deoxy-D-xylulose 5-phosphate-binding site is contributed by Lys125. Glu126 serves as a coordination point for NADPH. Asp150 contacts Mn(2+). Positions 151, 152, 186, and 209 each coordinate 1-deoxy-D-xylulose 5-phosphate. Glu152 lines the Mn(2+) pocket. Position 215 (Gly215) interacts with NADPH. Ser222, Asn227, Lys228, and Glu231 together coordinate 1-deoxy-D-xylulose 5-phosphate. Glu231 lines the Mn(2+) pocket.

The protein belongs to the DXR family. Mg(2+) serves as cofactor. Mn(2+) is required as a cofactor.

The enzyme catalyses 2-C-methyl-D-erythritol 4-phosphate + NADP(+) = 1-deoxy-D-xylulose 5-phosphate + NADPH + H(+). The protein operates within isoprenoid biosynthesis; isopentenyl diphosphate biosynthesis via DXP pathway; isopentenyl diphosphate from 1-deoxy-D-xylulose 5-phosphate: step 1/6. Its function is as follows. Catalyzes the NADPH-dependent rearrangement and reduction of 1-deoxy-D-xylulose-5-phosphate (DXP) to 2-C-methyl-D-erythritol 4-phosphate (MEP). The polypeptide is 1-deoxy-D-xylulose 5-phosphate reductoisomerase (Photobacterium profundum (strain SS9)).